The chain runs to 159 residues: Transcriptional repressor NrdR (159 aa).

A zinc finger spans residues 3–34; it reads CPFCGAEDTSVVDSRISEEGARIRRRRRCVEC. The 91-residue stretch at 49–139 folds into the ATP-cone domain; that stretch reads PQVIKQDGNR…VYRSFEDVGD (91 aa).

This sequence belongs to the NrdR family. It depends on Zn(2+) as a cofactor.

In terms of biological role, negatively regulates transcription of bacterial ribonucleotide reductase nrd genes and operons by binding to NrdR-boxes. This is Transcriptional repressor NrdR from Nitrosomonas europaea (strain ATCC 19718 / CIP 103999 / KCTC 2705 / NBRC 14298).